The sequence spans 344 residues: Eukaryotic translation initiation factor 2 subunit alpha homolog (344 aa).

The 72-residue stretch at 21 to 92 (DMAVMIQVKN…EKGYIDLSKR (72 aa)) folds into the S1 motif domain. S56 bears the Phosphoserine; by GCN2 mark. The disordered stretch occupies residues 312-344 (DNEEMSGDEDSGDEEEDTGMGEVDLDAGAGIIE). The segment covering 314–336 (EEMSGDEDSGDEEEDTGMGEVDL) has biased composition (acidic residues).

Belongs to the eIF-2-alpha family. Heterotrimer composed of an alpha, a beta and a gamma chain. In terms of processing, phosphorylated at Ser-56 by GCN2.

Functionally, functions in the early steps of protein synthesis by forming a ternary complex with GTP and initiator tRNA. This complex binds to a 40S ribosomal subunit, followed by mRNA binding to form a 43S pre-initiation complex. Junction of the 60S ribosomal subunit to form the 80S initiation complex is preceded by hydrolysis of the GTP bound to eIF-2 and release of an eIF-2-GDP binary complex. In order for eIF-2 to recycle and catalyze another round of initiation, the GDP bound to eIF-2 must exchange with GTP by way of a reaction catalyzed by eIF-2B. In Arabidopsis thaliana (Mouse-ear cress), this protein is Eukaryotic translation initiation factor 2 subunit alpha homolog.